Consider the following 398-residue polypeptide: Na(+)/H(+) antiporter NhaA (398 aa).

11 consecutive transmembrane segments (helical) span residues 14–34 (AAGVMLMMATVLALTFANWSV), 60–80 (LLLWINDGLMAIFFLLIGLEV), 96–116 (MLPLAAAVGGMVFPALFFLLF), 125–145 (VGWAIPAATDIAFAIGVLTLL), 155–175 (VFLLALAIIDDLGAILIIALF), 179–199 (QIFWPALGGAVLAVAALAYLN), 214–234 (IVLWVCILKCGVHATLAGVIV), 263–283 (FLIIPLFAFANAGIVLQGIVL), 292–312 (LGIAAGLLVGKPLGITLLSWL), 330–350 (IVAVSVLCGIGFTMSIFITLL), and 362–382 (YAKLGILLASGLAALLGYLAL).

This sequence belongs to the NhaA Na(+)/H(+) (TC 2.A.33) antiporter family.

The protein resides in the cell inner membrane. It carries out the reaction Na(+)(in) + 2 H(+)(out) = Na(+)(out) + 2 H(+)(in). Na(+)/H(+) antiporter that extrudes sodium in exchange for external protons. This Pectobacterium carotovorum subsp. carotovorum (strain PC1) protein is Na(+)/H(+) antiporter NhaA.